A 127-amino-acid chain; its full sequence is Holo-[acyl-carrier-protein] synthase (127 aa).

2 residues coordinate Mg(2+): Asp-9 and Glu-58.

This sequence belongs to the P-Pant transferase superfamily. AcpS family. Mg(2+) serves as cofactor.

It is found in the cytoplasm. The enzyme catalyses apo-[ACP] + CoA = holo-[ACP] + adenosine 3',5'-bisphosphate + H(+). Its function is as follows. Transfers the 4'-phosphopantetheine moiety from coenzyme A to a Ser of acyl-carrier-protein. The protein is Holo-[acyl-carrier-protein] synthase of Shewanella baltica (strain OS185).